The following is a 187-amino-acid chain: Inner membrane-spanning protein YciB (187 aa).

The next 5 helical transmembrane spans lie at 22–42 (IYVA…VTYA), 50–70 (MQLI…FFHD), 80–100 (IIYV…KSVV), 118–138 (INWA…YIAY), and 148–168 (FKVF…GVYI).

It belongs to the YciB family.

Its subcellular location is the cell inner membrane. Functionally, plays a role in cell envelope biogenesis, maintenance of cell envelope integrity and membrane homeostasis. The sequence is that of Inner membrane-spanning protein YciB from Vibrio parahaemolyticus serotype O3:K6 (strain RIMD 2210633).